Consider the following 149-residue polypeptide: MHRIDVKLLDPRLKTHPPAYASAGAAGLDLRACLDAPVLLHPGETTLVPSGLAIHLADPGLAAMVLPRSGLGHKHGIVLGNLVGLIDSDYQGQVFVSVWNRGRDVFTIQPMERIAQLVVVPVLQVGFNVVDDFAASERGEGGFGSTGKH.

Substrate contacts are provided by residues 68-70 (RSG), Asn81, and 85-87 (LID).

Belongs to the dUTPase family. Mg(2+) serves as cofactor.

The enzyme catalyses dUTP + H2O = dUMP + diphosphate + H(+). It participates in pyrimidine metabolism; dUMP biosynthesis; dUMP from dCTP (dUTP route): step 2/2. This enzyme is involved in nucleotide metabolism: it produces dUMP, the immediate precursor of thymidine nucleotides and it decreases the intracellular concentration of dUTP so that uracil cannot be incorporated into DNA. The sequence is that of Deoxyuridine 5'-triphosphate nucleotidohydrolase from Azoarcus sp. (strain BH72).